We begin with the raw amino-acid sequence, 159 residues long: Transcription elongation factor A protein-like 1 (159 aa).

The interval 1–99 (MDKPRKENEE…CGVGKHKLEE (99 aa)) is disordered. Residues 17–34 (KTDEERPPVEHSPEKQSL) show a composition bias toward basic and acidic residues. Positions 37 to 54 (QSSEEQSSEEEFFPEELL) are enriched in acidic residues. Over residues 64–80 (SEERPPQEGLSRKDLFE) the composition is skewed to basic and acidic residues.

The protein belongs to the TFS-II family. TFA subfamily.

It localises to the nucleus. In terms of biological role, may be involved in transcriptional regulation. Modulates various viral and cellular promoters in a promoter context-dependent manner. Does not bind DNA directly. The chain is Transcription elongation factor A protein-like 1 from Ateles geoffroyi (Black-handed spider monkey).